Consider the following 116-residue polypeptide: Prefoldin subunit beta (116 aa).

It belongs to the prefoldin subunit beta family. Heterohexamer of two alpha and four beta subunits.

The protein resides in the cytoplasm. Functionally, molecular chaperone capable of stabilizing a range of proteins. Seems to fulfill an ATP-independent, HSP70-like function in archaeal de novo protein folding. The protein is Prefoldin subunit beta of Thermococcus onnurineus (strain NA1).